Here is a 292-residue protein sequence, read N- to C-terminus: THO complex subunit 4B (292 aa).

Residues 1–50 (MSGGLDMSLDDIIKSNRKPTGSRGRGGIGGGNNTGGRGGSGSNSGPSRRF) are disordered. Ser2 is modified (N-acetylserine). The segment covering 23-42 (RGRGGIGGGNNTGGRGGSGS) has biased composition (gly residues). The 78-residue stretch at 108-185 (TKLYISNLDY…KLMKIEIVGT (78 aa)) folds into the RRM domain. Residues 241-252 (GGGFGGGNFRGG) show a composition bias toward gly residues. Residues 241 to 292 (GGGFGGGNFRGGRGARGRGGRGSGGRGRDENVSAEDLDAELDKYHKEAMETS) form a disordered region. Basic and acidic residues predominate over residues 280-292 (ELDKYHKEAMETS).

This sequence belongs to the ALYREF family. Interacts with RH15 and RH56.

The protein resides in the nucleus. Its subcellular location is the nucleoplasm. In terms of biological role, export adapter involved in nuclear export of spliced and unspliced mRNA. The polypeptide is THO complex subunit 4B (ALY2) (Arabidopsis thaliana (Mouse-ear cress)).